The sequence spans 417 residues: Serine hydroxymethyltransferase (417 aa).

(6S)-5,6,7,8-tetrahydrofolate-binding positions include Leu121 and 125–127 (GHL). An N6-(pyridoxal phosphate)lysine modification is found at Lys230. Glu245 is a (6S)-5,6,7,8-tetrahydrofolate binding site.

The protein belongs to the SHMT family. In terms of assembly, homodimer. Pyridoxal 5'-phosphate serves as cofactor.

The protein resides in the cytoplasm. It carries out the reaction (6R)-5,10-methylene-5,6,7,8-tetrahydrofolate + glycine + H2O = (6S)-5,6,7,8-tetrahydrofolate + L-serine. Its pathway is one-carbon metabolism; tetrahydrofolate interconversion. It functions in the pathway amino-acid biosynthesis; glycine biosynthesis; glycine from L-serine: step 1/1. Its function is as follows. Catalyzes the reversible interconversion of serine and glycine with tetrahydrofolate (THF) serving as the one-carbon carrier. This reaction serves as the major source of one-carbon groups required for the biosynthesis of purines, thymidylate, methionine, and other important biomolecules. Also exhibits THF-independent aldolase activity toward beta-hydroxyamino acids, producing glycine and aldehydes, via a retro-aldol mechanism. The chain is Serine hydroxymethyltransferase from Desulfitobacterium hafniense (strain DSM 10664 / DCB-2).